Reading from the N-terminus, the 258-residue chain is Axonemal dynein light intermediate polypeptide 1 (258 aa).

2 disordered regions span residues 19-60 (RNTE…CVPD) and 207-231 (VNEQKAKCEATEKRESERRQVEEKK). A compositionally biased stretch (low complexity) spans 34–48 (SPQQPGPSGSAPQLP). Residues 176–255 (MRKALQAEQG…LKAQLEGIIA (80 aa)) are a coiled coil.

The protein belongs to the inner dynein arm light chain family. Interacts with CFAP45. Interacts with DYNC1H1.

It is found in the cell projection. The protein localises to the cilium. Its subcellular location is the flagellum. It localises to the dynein axonemal particle. The protein resides in the cytoplasm. Involved in sperm flagellum assembly. This Macaca fascicularis (Crab-eating macaque) protein is Axonemal dynein light intermediate polypeptide 1 (DNALI1).